Consider the following 488-residue polypeptide: 3-octaprenyl-4-hydroxybenzoate carboxy-lyase (488 aa).

N172 is a binding site for Mn(2+). Prenylated FMN-binding positions include 175–177 (IYR), 189–191 (RWL), and 194–195 (RG). E238 contributes to the Mn(2+) binding site. D287 (proton donor) is an active-site residue.

Belongs to the UbiD family. Homohexamer. Prenylated FMN is required as a cofactor. Mn(2+) serves as cofactor.

The protein localises to the cell membrane. It carries out the reaction a 4-hydroxy-3-(all-trans-polyprenyl)benzoate + H(+) = a 2-(all-trans-polyprenyl)phenol + CO2. It functions in the pathway cofactor biosynthesis; ubiquinone biosynthesis. Functionally, catalyzes the decarboxylation of 3-octaprenyl-4-hydroxy benzoate to 2-octaprenylphenol, an intermediate step in ubiquinone biosynthesis. This is 3-octaprenyl-4-hydroxybenzoate carboxy-lyase from Pseudomonas fluorescens (strain SBW25).